We begin with the raw amino-acid sequence, 305 residues long: tRNA pseudouridine synthase B (305 aa).

The Nucleophile role is filled by D39.

It belongs to the pseudouridine synthase TruB family. Type 1 subfamily.

It catalyses the reaction uridine(55) in tRNA = pseudouridine(55) in tRNA. Responsible for synthesis of pseudouridine from uracil-55 in the psi GC loop of transfer RNAs. This chain is tRNA pseudouridine synthase B, found in Staphylococcus haemolyticus (strain JCSC1435).